The chain runs to 577 residues: Proline--tRNA ligase (577 aa).

The protein belongs to the class-II aminoacyl-tRNA synthetase family. ProS type 1 subfamily. As to quaternary structure, homodimer.

Its subcellular location is the cytoplasm. It catalyses the reaction tRNA(Pro) + L-proline + ATP = L-prolyl-tRNA(Pro) + AMP + diphosphate. Functionally, catalyzes the attachment of proline to tRNA(Pro) in a two-step reaction: proline is first activated by ATP to form Pro-AMP and then transferred to the acceptor end of tRNA(Pro). As ProRS can inadvertently accommodate and process non-cognate amino acids such as alanine and cysteine, to avoid such errors it has two additional distinct editing activities against alanine. One activity is designated as 'pretransfer' editing and involves the tRNA(Pro)-independent hydrolysis of activated Ala-AMP. The other activity is designated 'posttransfer' editing and involves deacylation of mischarged Ala-tRNA(Pro). The misacylated Cys-tRNA(Pro) is not edited by ProRS. The polypeptide is Proline--tRNA ligase (Herminiimonas arsenicoxydans).